The chain runs to 314 residues: Putative S-adenosyl-L-methionine-dependent methyltransferase MAV_4441 (314 aa).

Residues Asp-138 and Asp-167 to Leu-168 each bind S-adenosyl-L-methionine.

This sequence belongs to the UPF0677 family.

Its function is as follows. Exhibits S-adenosyl-L-methionine-dependent methyltransferase activity. In Mycobacterium avium (strain 104), this protein is Putative S-adenosyl-L-methionine-dependent methyltransferase MAV_4441.